The following is a 282-amino-acid chain: High mobility group nucleosome-binding domain-containing protein 5 (282 aa).

The interval 1–282 is disordered; that stretch reads MPKRKAAGQG…GKKEEPQSIV (282 aa). Residue threonine 31 is modified to Phosphothreonine. The segment covering 37–46 has biased composition (basic residues); the sequence is KRTSSSRKMK. Residue lysine 67 forms a Glycyl lysine isopeptide (Lys-Gly) (interchain with G-Cter in SUMO2) linkage. Position 76 is a phosphotyrosine (tyrosine 76). Over residues 81 to 119 the composition is skewed to basic and acidic residues; the sequence is KNGEAKITEAPASEKEIVEVKEENIEDATEKGGEKKEAV. At serine 93 the chain carries Phosphoserine. Residue lysine 101 forms a Glycyl lysine isopeptide (Lys-Gly) (interchain with G-Cter in SUMO1); alternate linkage. Lysine 101 is covalently cross-linked (Glycyl lysine isopeptide (Lys-Gly) (interchain with G-Cter in SUMO2); alternate). Lysine 124 participates in a covalent cross-link: Glycyl lysine isopeptide (Lys-Gly) (interchain with G-Cter in SUMO2). Residues 125-138 show a composition bias toward acidic residues; the sequence is NEEEDQKEDEEDQN. 2 stretches are compositionally biased toward basic and acidic residues: residues 139–152 and 158–256; these read EEKG…KDEK and KEDK…KEDL. A compositionally biased stretch (acidic residues) spans 257–270; sequence KEEEEGKEEDEIKE. The segment covering 271–282 has biased composition (basic and acidic residues); the sequence is DDGKKEEPQSIV.

It belongs to the HMGN family. As to expression, ubiquitously expressed.

Its subcellular location is the nucleus. In terms of biological role, preferentially binds to euchromatin and modulates cellular transcription by counteracting linker histone-mediated chromatin compaction. The polypeptide is High mobility group nucleosome-binding domain-containing protein 5 (HMGN5) (Homo sapiens (Human)).